A 705-amino-acid chain; its full sequence is Methionine--tRNA ligase (705 aa).

A 'HIGH' region motif is present at residues 17–27 (PYANGPVHLGH). The Zn(2+) site is built by C149, C152, C162, and C165. The 'KMSKS' region motif lies at 347 to 351 (KFSKS). K350 contributes to the ATP binding site. In terms of domain architecture, tRNA-binding spans 604–705 (EFQKVDLRVA…GEGINGQSVQ (102 aa)).

Belongs to the class-I aminoacyl-tRNA synthetase family. MetG type 1 subfamily. In terms of assembly, homodimer. Zn(2+) is required as a cofactor.

The protein resides in the cytoplasm. The enzyme catalyses tRNA(Met) + L-methionine + ATP = L-methionyl-tRNA(Met) + AMP + diphosphate. Functionally, is required not only for elongation of protein synthesis but also for the initiation of all mRNA translation through initiator tRNA(fMet) aminoacylation. The chain is Methionine--tRNA ligase from Chlorobium chlorochromatii (strain CaD3).